We begin with the raw amino-acid sequence, 453 residues long: Bis(5'-adenosyl)-triphosphatase ENPP4 (453 aa).

The N-terminal stretch at 1–15 (MKLLVILLFSGLITG) is a signal peptide. At 16-407 (FRSDSSSSLP…DQWCINLPEA (392 aa)) the chain is on the extracellular side. Residues aspartate 34 and threonine 70 each contribute to the Zn(2+) site. The active-site AMP-threonine intermediate is threonine 70. Substrate contacts are provided by asparagine 91 and tyrosine 154. 2 N-linked (GlcNAc...) asparagine glycosylation sites follow: asparagine 155 and asparagine 166. Residues aspartate 189, histidine 193, aspartate 237, and histidine 238 each contribute to the Zn(2+) site. Substrate is bound at residue aspartate 189. Cysteine 254 and cysteine 287 are disulfide-bonded. N-linked (GlcNAc...) asparagine glycosylation is present at asparagine 276. Histidine 336 provides a ligand contact to Zn(2+). The N-linked (GlcNAc...) asparagine glycan is linked to asparagine 386. Cysteines 394 and 401 form a disulfide. Residues 408–428 (IAIVIGSLLVLTMLTCLIIIM) traverse the membrane as a helical segment. Topologically, residues 429-453 (QNRLSVPRPFSRLQLQEDDDDPLIG) are cytoplasmic.

The protein belongs to the nucleotide pyrophosphatase/phosphodiesterase family. Zn(2+) serves as cofactor. Expressed on the surface of vascular endothelia.

The protein resides in the cell membrane. The catalysed reaction is P(1),P(3)-bis(5'-adenosyl) triphosphate + H2O = AMP + ADP + 2 H(+). Its function is as follows. Hydrolyzes extracellular Ap3A into AMP and ADP, and Ap4A into AMP and ATP. Ap3A and Ap4A are diadenosine polyphosphates thought to induce proliferation of vascular smooth muscle cells. Acts as a procoagulant, mediating platelet aggregation at the site of nascent thrombus via release of ADP from Ap3A and activation of ADP receptors. This is Bis(5'-adenosyl)-triphosphatase ENPP4 (ENPP4) from Homo sapiens (Human).